Consider the following 296-residue polypeptide: NAD kinase (296 aa).

Asp72 (proton acceptor) is an active-site residue. Residues 72–73 (DG), 146–147 (ND), Arg157, Lys174, Asp176, 187–192 (TAYALS), and Gln247 each bind NAD(+).

This sequence belongs to the NAD kinase family. A divalent metal cation serves as cofactor.

It localises to the cytoplasm. It catalyses the reaction NAD(+) + ATP = ADP + NADP(+) + H(+). Functionally, involved in the regulation of the intracellular balance of NAD and NADP, and is a key enzyme in the biosynthesis of NADP. Catalyzes specifically the phosphorylation on 2'-hydroxyl of the adenosine moiety of NAD to yield NADP. The polypeptide is NAD kinase (Pseudomonas putida (strain ATCC 700007 / DSM 6899 / JCM 31910 / BCRC 17059 / LMG 24140 / F1)).